The following is a 467-amino-acid chain: Dimethylamine methyltransferase MtbB1 (467 aa).

A non-standard amino acid (pyrrolysine) is located at residue O356.

This sequence belongs to the dimethylamine methyltransferase family. As to quaternary structure, may form homotetramers or homopentamers.

The catalysed reaction is Co(I)-[dimethylamine-specific corrinoid protein] + dimethylamine + H(+) = methyl-Co(III)-[dimethylamine-specific corrinoid protein] + methylamine. It functions in the pathway one-carbon metabolism; methanogenesis from dimethylamine. Catalyzes the transfer of a methyl group from dimethylamine to the corrinoid cofactor of MtbC. The major or perhaps only DMA methyltransferase expressed under inducing conditions. This Methanosarcina barkeri protein is Dimethylamine methyltransferase MtbB1.